Reading from the N-terminus, the 451-residue chain is Gamma-aminobutyric acid receptor subunit alpha-2 (451 aa).

The first 28 residues, 1 to 28 (MKTKLNIYNMQFLLFVFLVWDPARLVLA), serve as a signal peptide directing secretion. The Extracellular segment spans residues 29-249 (NIQEDEAKNN…MTAHFHLKRK (221 aa)). Residue Asn-38 is glycosylated (N-linked (GlcNAc...) asparagine). Arg-94 serves as a coordination point for 4-aminobutanoate. An N-linked (GlcNAc...) asparagine glycan is attached at Asn-138. Thr-157 lines the 4-aminobutanoate pocket. A disulfide bridge connects residues Cys-166 and Cys-180. A helical membrane pass occupies residues 250 to 270 (IGYFVIQTYLPCIMTVILSQV). Residues 271-280 (SFWLNRESVP) lie on the Cytoplasmic side of the membrane. Residues 281–300 (ARTVFGVTTVLTMTTLSISA) traverse the membrane as a helical segment. Over 301–311 (RNSLPKVAYAT) the chain is Extracellular. The chain crosses the membrane as a helical span at residues 312-332 (AMDWFIAVCYAFVFSALIEFA). Residues 333–420 (TVNYFTKRGW…FNSVSKIDRM (88 aa)) lie on the Cytoplasmic side of the membrane. A helical membrane pass occupies residues 421 to 441 (SRIVFPVLFGTFNLVYWATYL). Residues 442–451 (NREPVLGVSP) lie on the Extracellular side of the membrane.

It belongs to the ligand-gated ion channel (TC 1.A.9) family. Gamma-aminobutyric acid receptor (TC 1.A.9.5) subfamily. GABRA2 sub-subfamily. Heteropentamer, formed by a combination of alpha (GABRA1-6), beta (GABRB1-3), gamma (GABRG1-3), delta (GABRD), epsilon (GABRE), rho (GABRR1-3), pi (GABRP) and theta (GABRQ) subunits, each subunit exhibiting distinct physiological and pharmacological properties. Interacts with UBQLN1. Interacts with KIF21B. Interacts with LHFPL4. Interacts with SHISA7; interaction leads to the regulation of GABA(A) receptor trafficking, channel deactivation kinetics and pharmacology. Post-translationally, glycosylated.

The protein resides in the postsynaptic cell membrane. The protein localises to the cell membrane. It is found in the cytoplasmic vesicle membrane. Its subcellular location is the cell projection. It localises to the dendrite. It carries out the reaction chloride(in) = chloride(out). Activated by pentobarbital. Inhibited by the antagonist bicuculline. In terms of biological role, alpha subunit of the heteropentameric ligand-gated chloride channel gated by gamma-aminobutyric acid (GABA), a major inhibitory neurotransmitter in the brain. GABA-gated chloride channels, also named GABA(A) receptors (GABAAR), consist of five subunits arranged around a central pore and contain GABA active binding site(s) located at the alpha and beta subunit interfaces. When activated by GABA, GABAARs selectively allow the flow of chloride anions across the cell membrane down their electrochemical gradient. Chloride influx into the postsynaptic neuron following GABAAR opening decreases the neuron ability to generate a new action potential, thereby reducing nerve transmission. The alpha-2 subunit exhibits synaptogenic activity together with beta-2 and very little to no activity together with beta-3, the gamma-2 subunit being necessary but not sufficient to induce rapid synaptic contacts formation. The polypeptide is Gamma-aminobutyric acid receptor subunit alpha-2 (Homo sapiens (Human)).